Consider the following 317-residue polypeptide: Ribosomal RNA large subunit methyltransferase F (317 aa).

The protein belongs to the methyltransferase superfamily. METTL16/RlmF family.

It is found in the cytoplasm. The catalysed reaction is adenosine(1618) in 23S rRNA + S-adenosyl-L-methionine = N(6)-methyladenosine(1618) in 23S rRNA + S-adenosyl-L-homocysteine + H(+). Functionally, specifically methylates the adenine in position 1618 of 23S rRNA. This is Ribosomal RNA large subunit methyltransferase F from Pseudomonas putida (strain ATCC 47054 / DSM 6125 / CFBP 8728 / NCIMB 11950 / KT2440).